The following is a 166-amino-acid chain: uncharacterized protein (166 aa).

This is an uncharacterized protein from Bacillus subtilis (strain 168).